The following is a 727-amino-acid chain: MSDEKKCPVTGRTSSQVAGSGTSNKDWWPNQLNLNILHQHSAKSDPMGKDFNYAEEFKKLDLEALKKDLFELMTDSQDWWPADYGHYGPFFIRMAWHSAGTYRIGDGRGGAGSGSQRLAPLNSWPDNVNLDKARRLLWPIKKKYGRKISWADLMIFAGNCAIESMGLKPFGFAGGREDIWEPEEDIYWGDEDTWLGDTRYSGDRKLDNPLAAVQMGLIYVNPEGPNGDPNAVASGKDVRETFARMAMNDEETVALVAGGHTFGKCHGAGDAANVGPDPEGAPIEQQGLGWKSKFGSGKGGDTISSGIEGAWTPTPIKWDNSYFDTLFGYEWNLEKSPAGAWQWHPSDPEAKKAVPDAHDPSKTHPPMMTTADLSLRMDPIYAPIAKRFHENPEEFADAFARAWFKLTHRDMGPRARYLGSMVPDEELIWQDPVPAVDHELIDNTEIADLKAKILASGLSISKLVSAAWASASTYRDSDKRGGSNGARIRLAPQKDWYVNQPLQLPELLNKLEEIQQHFNSKSGNKKVSLADLIVLGGCAAVEQGAKNAGFDVTVPFTPGRTDASQEQTDVHSFAVLEPAADGFRNYQKVKYSVTPEELLVDKAQLMTLTAPEMTVLIGGMRVLDANFDGSKHGVFTDKPGSLNNDFFSNLLDMDTVWTSTSEDAELFEGRDRESGELKWSATRIDLIFGANSQLRAIAEVYGCEDSGEKFVNDFISAWDKVMNLGIF.

Positions 1–26 are disordered; sequence MSDEKKCPVTGRTSSQVAGSGTSNKD. Residues 11–26 show a composition bias toward polar residues; that stretch reads GRTSSQVAGSGTSNKD. The tryptophyl-tyrosyl-methioninium (Trp-Tyr) (with M-245) cross-link spans 96 to 219; that stretch reads WHSAGTYRIG…LAAVQMGLIY (124 aa). H97 functions as the Proton acceptor in the catalytic mechanism. The segment at residues 219–245 is a cross-link (tryptophyl-tyrosyl-methioninium (Tyr-Met) (with W-96)); sequence YVNPEGPNGDPNAVASGKDVRETFARM. Residue H260 coordinates heme b. Residues 346–362 show a composition bias toward basic and acidic residues; sequence SDPEAKKAVPDAHDPSK. The interval 346-365 is disordered; that stretch reads SDPEAKKAVPDAHDPSKTHP.

It belongs to the peroxidase family. Peroxidase/catalase subfamily. As to quaternary structure, homodimer or homotetramer. Heme b is required as a cofactor. Formation of the three residue Trp-Tyr-Met cross-link is important for the catalase, but not the peroxidase activity of the enzyme.

The enzyme catalyses H2O2 + AH2 = A + 2 H2O. The catalysed reaction is 2 H2O2 = O2 + 2 H2O. In terms of biological role, bifunctional enzyme with both catalase and broad-spectrum peroxidase activity. In Maridesulfovibrio salexigens (strain ATCC 14822 / DSM 2638 / NCIMB 8403 / VKM B-1763) (Desulfovibrio salexigens), this protein is Catalase-peroxidase.